Consider the following 551-residue polypeptide: Tripartite motif-containing protein 5 (551 aa).

Ala2 bears the N-acetylalanine mark. The RING-type zinc finger occupies 15 to 55 (CPICLELLTEPLSLDCGHSFCQACITANHKESRERSCPLCR). Ser82 carries the post-translational modification Phosphoserine. The segment at 87–128 (QKVDRCARHGEKLLLFCQQHGNVICWLCERSEEHRGHRTSLV) adopts a B box-type zinc-finger fold. 4 residues coordinate Zn(2+): Cys92, His95, Cys114, and His120. Positions 127-221 (LVEEVAQKYR…VQSENDMVLQ (95 aa)) form a coiled coil. The segment at 182–195 (FKQLRDILDCEESN) is required for interaction with GABARAP and for autophagy. The B30.2/SPRY domain occupies 276 to 551 (PDLKGMLQVF…LPMTLCSPSS (276 aa)).

The protein belongs to the TRIM/RBCC family. In terms of assembly, can form homodimers and homotrimers. In addition to lower-order dimerization, also exhibits a higher-order multimerization and both low- and high-order multimerizations are essential for its restriction activity. Interacts with BTBD1 and BTBD2. Interacts with PSMC4, PSMC5, PSMD7 and HSPA8/HSC70. Interacts (via B30.2/SPRY domain) with HSPA1A/B. Interacts with PSMC2, MAP3K7/TAK1, TAB2 and TAB3. Interacts with SQSTM1. Interacts with TRIM6 and TRIM34. Interacts with ULK1 (phosphorylated form), GABARAP, GABARAPL1, GABARAPL2, MAP1LC3A, MAP1LC3C and BECN1. Post-translationally, degraded in a proteasome-independent fashion in the absence of viral infection but in a proteasome-dependent fashion following exposure to restriction sensitive virus. Autoubiquitinated in a RING finger- and UBE2D2-dependent manner. Monoubiquitinated by TRIM21. Deubiquitinated by Yersinia YopJ. Ubiquitination may not lead to proteasomal degradation.

The protein resides in the cytoplasm. Its subcellular location is the nucleus. It carries out the reaction S-ubiquitinyl-[E2 ubiquitin-conjugating enzyme]-L-cysteine + [acceptor protein]-L-lysine = [E2 ubiquitin-conjugating enzyme]-L-cysteine + N(6)-ubiquitinyl-[acceptor protein]-L-lysine.. Its pathway is protein modification; protein ubiquitination. Capsid-specific restriction factor that prevents infection from non-host-adapted retroviruses. Blocks viral replication early in the life cycle, after viral entry but before reverse transcription. In addition to acting as a capsid-specific restriction factor, also acts as a pattern recognition receptor that activates innate immune signaling in response to the retroviral capsid lattice. Binding to the viral capsid triggers its E3 ubiquitin ligase activity, and in concert with the heterodimeric ubiquitin conjugating enzyme complex UBE2V1-UBE2N (also known as UBC13-UEV1A complex) generates 'Lys-63'-linked polyubiquitin chains, which in turn are catalysts in the autophosphorylation of the MAP3K7/TAK1 complex (includes TAK1, TAB2, and TAB3). Activation of the MAP3K7/TAK1 complex by autophosphorylation results in the induction and expression of NF-kappa-B and MAPK-responsive inflammatory genes, thereby leading to an innate immune response in the infected cell. Plays a role in regulating autophagy through activation of autophagy regulator BECN1 by causing its dissociation from its inhibitors BCL2 and TAB2. This chain is Tripartite motif-containing protein 5 (TRIM5), found in Alouatta sara (Bolivian red howler monkey).